Consider the following 93-residue polypeptide: Cell division topological specificity factor (93 aa).

Belongs to the MinE family.

In terms of biological role, prevents the cell division inhibition by proteins MinC and MinD at internal division sites while permitting inhibition at polar sites. This ensures cell division at the proper site by restricting the formation of a division septum at the midpoint of the long axis of the cell. The sequence is that of Cell division topological specificity factor from Synechococcus sp. (strain WH7803).